The following is a 131-amino-acid chain: Period circadian protein (131 aa).

Residues 29-109 (VTAPVELDPP…NSAGGASGGV (81 aa)) form a disordered region. Residues 71–93 (SGNFTTGSNVRMSSVTNTSNAGT) show a composition bias toward low complexity. Residues 94-109 (GTSGGGNSAGGASGGV) show a composition bias toward gly residues.

In terms of assembly, forms a heterodimer with timeless (TIM); the complex then translocates into the nucleus. Post-translationally, phosphorylated with a circadian rhythmicity, probably by the double-time protein (dbt). Phosphorylation could be implicated in the stability of per monomer and in the formation of heterodimer per-tim.

Its subcellular location is the nucleus. The protein resides in the cytoplasm. It is found in the perinuclear region. Functionally, essential for biological clock functions. Determines the period length of circadian and ultradian rhythms; an increase in PER dosage leads to shortened circadian rhythms and a decrease leads to lengthened circadian rhythms. Essential for the circadian rhythmicity of locomotor activity, eclosion behavior, and for the rhythmic component of the male courtship song that originates in the thoracic nervous system. The biological cycle depends on the rhythmic formation and nuclear localization of the TIM-PER complex. Light induces the degradation of TIM, which promotes elimination of PER. Nuclear activity of the heterodimer coordinatively regulates PER and TIM transcription through a negative feedback loop. Behaves as a negative element in circadian transcriptional loop. Does not appear to bind DNA, suggesting indirect transcriptional inhibition. The polypeptide is Period circadian protein (per) (Zaprionus tuberculatus (Vinegar fly)).